We begin with the raw amino-acid sequence, 264 residues long: MEKIKVCLVDDNKELVSMLESYVAAQDDMEVIGTAYNGQECLNLLKDKQPDVLVLDIIMPHLDGLAVLEKMRHIERLRQPSVIMLTAFGQEDVTKKAVDLGASYFILKPFDMENLTSHIRQVSGKANATIKRPLPSFRSATTVDGKPKNLDASITSIIHEIGVPAHIKGYMYLREAISMVYNDIELLGSITKVLYPDIAKKYNTTASRVERAIRHAIEVAWSRGNIDSISSLFGYTVSMSKAKPTNSEFIAMVADKLRLEHKAS.

Positions 5–123 (KVCLVDDNKE…NLTSHIRQVS (119 aa)) constitute a Response regulatory domain. The Ca(2+) site is built by aspartate 10, aspartate 11, and aspartate 56. A 4-aspartylphosphate modification is found at aspartate 56. The H-T-H motif DNA-binding region spans 196 to 215 (PDIAKKYNTTASRVERAIRH).

It depends on Ca(2+) as a cofactor. In terms of processing, phosphorylated by KinA and KinB.

Its subcellular location is the cytoplasm. Functionally, may play the central regulatory role in sporulation. It may be an element of the effector pathway responsible for the activation of sporulation genes in response to nutritional stress. Spo0A may act in concert with Spo0H (a sigma factor) to control the expression of some genes that are critical to the sporulation process. Repressor of abrB, activator of the spoIIa operon. Binds the DNA sequence 5'-TGNCGAA-3' (0A box). The chain is Stage 0 sporulation protein A (spo0A) from Bacillus anthracis.